A 299-amino-acid polypeptide reads, in one-letter code: Leucine zipper transcription factor-like protein 1 (299 aa).

A coiled-coil region spans residues Leu-96–Glu-296. Residues Gly-145–Asp-299 form an interaction with BSS9 region.

Belongs to the LZTFL1 family. Self-associates. Interacts with BBS9; the interaction mediates the association of LZTL1 with the BBsome complex and regulates BBSome ciliary trafficking.

The protein resides in the cytoplasm. In terms of biological role, regulates ciliary localization of the BBSome complex. Together with the BBSome complex, controls SMO ciliary trafficking and contributes to the sonic hedgehog (SHH) pathway regulation. May play a role in neurite outgrowth. May have tumor suppressor function. This is Leucine zipper transcription factor-like protein 1 (LZTFL1) from Pongo abelii (Sumatran orangutan).